A 372-amino-acid polypeptide reads, in one-letter code: Long-tail fiber protein gp35 (372 aa).

The region spanning 22–193 (NSVRYKISIA…VGATGFPRGT (172 aa)) is the GG-type lectin domain.

In terms of assembly, the long-tail fibers are trimeric, with a stoichiometry of gp34/gp37/gp36/gp35 of 3:3:3:1.

Its subcellular location is the virion. Functionally, structural component of the distal-half of the long-tail fiber. The long-tail fiber of T4 is about 1600 Angstroms long with a kink in the middle that divides the fiber into proximal and distal halves. The latter hinge is probably composed of gp35 protein. This chain is Long-tail fiber protein gp35 (35), found in Enterobacteria phage T4 (Bacteriophage T4).